The primary structure comprises 78 residues: Acyl carrier protein (78 aa).

The region spanning 2-77 (SEIAQKVKSI…QAIAYLEQHV (76 aa)) is the Carrier domain. Ser-37 is modified (O-(pantetheine 4'-phosphoryl)serine).

It belongs to the acyl carrier protein (ACP) family. Post-translationally, 4'-phosphopantetheine is transferred from CoA to a specific serine of apo-ACP by AcpS. This modification is essential for activity because fatty acids are bound in thioester linkage to the sulfhydryl of the prosthetic group.

The protein localises to the cytoplasm. It functions in the pathway lipid metabolism; fatty acid biosynthesis. In terms of biological role, carrier of the growing fatty acid chain in fatty acid biosynthesis. The polypeptide is Acyl carrier protein (Cytophaga hutchinsonii (strain ATCC 33406 / DSM 1761 / CIP 103989 / NBRC 15051 / NCIMB 9469 / D465)).